The primary structure comprises 123 residues: Large ribosomal subunit protein bL12 (123 aa).

This sequence belongs to the bacterial ribosomal protein bL12 family. As to quaternary structure, homodimer. Part of the ribosomal stalk of the 50S ribosomal subunit. Forms a multimeric L10(L12)X complex, where L10 forms an elongated spine to which 2 to 4 L12 dimers bind in a sequential fashion. Binds GTP-bound translation factors.

Its function is as follows. Forms part of the ribosomal stalk which helps the ribosome interact with GTP-bound translation factors. Is thus essential for accurate translation. The chain is Large ribosomal subunit protein bL12 from Shewanella sp. (strain MR-4).